A 428-amino-acid polypeptide reads, in one-letter code: Serine--tRNA ligase (428 aa).

231–233 (TAE) lines the L-serine pocket. Residue 262–264 (RSE) participates in ATP binding. L-serine is bound at residue Glu285. An ATP-binding site is contributed by 349–352 (EISS). Ser385 serves as a coordination point for L-serine.

It belongs to the class-II aminoacyl-tRNA synthetase family. Type-1 seryl-tRNA synthetase subfamily. In terms of assembly, homodimer. The tRNA molecule binds across the dimer.

The protein localises to the cytoplasm. The enzyme catalyses tRNA(Ser) + L-serine + ATP = L-seryl-tRNA(Ser) + AMP + diphosphate + H(+). The catalysed reaction is tRNA(Sec) + L-serine + ATP = L-seryl-tRNA(Sec) + AMP + diphosphate + H(+). It functions in the pathway aminoacyl-tRNA biosynthesis; selenocysteinyl-tRNA(Sec) biosynthesis; L-seryl-tRNA(Sec) from L-serine and tRNA(Sec): step 1/1. Catalyzes the attachment of serine to tRNA(Ser). Is also able to aminoacylate tRNA(Sec) with serine, to form the misacylated tRNA L-seryl-tRNA(Sec), which will be further converted into selenocysteinyl-tRNA(Sec). The polypeptide is Serine--tRNA ligase (Staphylococcus aureus (strain MRSA252)).